The sequence spans 561 residues: DNA ligase (561 aa).

E249 lines the ATP pocket. The active-site N6-AMP-lysine intermediate is K251. ATP-binding residues include R256, R271, E301, F340, R417, and K423.

The protein belongs to the ATP-dependent DNA ligase family. Mg(2+) is required as a cofactor.

It catalyses the reaction ATP + (deoxyribonucleotide)n-3'-hydroxyl + 5'-phospho-(deoxyribonucleotide)m = (deoxyribonucleotide)n+m + AMP + diphosphate.. Functionally, DNA ligase that seals nicks in double-stranded DNA during DNA replication, DNA recombination and DNA repair. In Methanothermobacter thermautotrophicus (strain ATCC 29096 / DSM 1053 / JCM 10044 / NBRC 100330 / Delta H) (Methanobacterium thermoautotrophicum), this protein is DNA ligase.